A 465-amino-acid chain; its full sequence is FeMo cofactor biosynthesis protein FixZ (465 aa).

The interval 1–36 (MSEPEIKVGKTSSALFDRAPMAPSMPGGRASSSHGL) is disordered. The Radical SAM core domain occupies 61–312 (HHYFARMHXX…MRHCQQCRAD (252 aa)). [4Fe-4S] cluster contacts are provided by C75 and C79. Y81 lines the S-adenosyl-L-methionine pocket. C82 lines the [4Fe-4S] cluster pocket. The S-adenosyl-L-methionine site is built by G129, T181, and I233. C306 and C309 together coordinate [4Fe-4S] cluster.

The protein belongs to the radical SAM superfamily. NifB family. It depends on [4Fe-4S] cluster as a cofactor.

It participates in cofactor biosynthesis; Fe-Mo cofactor biosynthesis. Functionally, involved in the biosynthesis of the iron-molybdenum cofactor (FeMo-co or M-cluster) found in the dinitrogenase enzyme of the nitrogenase complex in nitrogen-fixing microorganisms. Catalyzes the crucial step of radical SAM-dependent carbide insertion that occurs concomitant with the insertion of a 9th sulfur and the rearrangement/coupling of two [4Fe-4S] clusters into a [8Fe-9S-C] cluster, the precursor to the M-cluster. This chain is FeMo cofactor biosynthesis protein FixZ (fixZ), found in Rhizobium leguminosarum.